A 258-amino-acid chain; its full sequence is Imidazole glycerol phosphate synthase subunit HisF (258 aa).

Active-site residues include Asp-11 and Asp-130.

This sequence belongs to the HisA/HisF family. In terms of assembly, heterodimer of HisH and HisF.

It localises to the cytoplasm. It catalyses the reaction 5-[(5-phospho-1-deoxy-D-ribulos-1-ylimino)methylamino]-1-(5-phospho-beta-D-ribosyl)imidazole-4-carboxamide + L-glutamine = D-erythro-1-(imidazol-4-yl)glycerol 3-phosphate + 5-amino-1-(5-phospho-beta-D-ribosyl)imidazole-4-carboxamide + L-glutamate + H(+). It functions in the pathway amino-acid biosynthesis; L-histidine biosynthesis; L-histidine from 5-phospho-alpha-D-ribose 1-diphosphate: step 5/9. Its function is as follows. IGPS catalyzes the conversion of PRFAR and glutamine to IGP, AICAR and glutamate. The HisF subunit catalyzes the cyclization activity that produces IGP and AICAR from PRFAR using the ammonia provided by the HisH subunit. This is Imidazole glycerol phosphate synthase subunit HisF from Escherichia coli O6:K15:H31 (strain 536 / UPEC).